The chain runs to 108 residues: Nucleoid-associated protein Bphyt_1827 (108 aa).

Positions 87–108 (AQEKMGGMTSGLPLPPGFKLPF) are disordered. Residues 99–108 (PLPPGFKLPF) are compositionally biased toward pro residues.

This sequence belongs to the YbaB/EbfC family. As to quaternary structure, homodimer.

It is found in the cytoplasm. The protein localises to the nucleoid. Its function is as follows. Binds to DNA and alters its conformation. May be involved in regulation of gene expression, nucleoid organization and DNA protection. This is Nucleoid-associated protein Bphyt_1827 from Paraburkholderia phytofirmans (strain DSM 17436 / LMG 22146 / PsJN) (Burkholderia phytofirmans).